The following is an 860-amino-acid chain: Tetratricopeptide repeat protein 13 (860 aa).

TPR repeat units lie at residues 143–176 (TNEE…EPDL), 216–248 (PEVF…LQPS), 249–282 (ARLY…NKNQ), 284–316 (IAML…KVDF), 317–350 (IDAY…NQNH), 352–384 (QTLQ…EPYN), and 386–418 (VCQY…DPLP).

This chain is Tetratricopeptide repeat protein 13 (TTC13), found in Homo sapiens (Human).